The sequence spans 271 residues: L-aspartate dehydrogenase (271 aa).

NAD(+) is bound by residues Ala-124 and Asn-192. The active site involves His-222.

It belongs to the L-aspartate dehydrogenase family.

The catalysed reaction is L-aspartate + NADP(+) + H2O = oxaloacetate + NH4(+) + NADPH + H(+). It catalyses the reaction L-aspartate + NAD(+) + H2O = oxaloacetate + NH4(+) + NADH + H(+). Its pathway is cofactor biosynthesis; NAD(+) biosynthesis; iminoaspartate from L-aspartate (dehydrogenase route): step 1/1. Specifically catalyzes the NAD or NADP-dependent dehydrogenation of L-aspartate to iminoaspartate. This Methanococcoides burtonii (strain DSM 6242 / NBRC 107633 / OCM 468 / ACE-M) protein is L-aspartate dehydrogenase.